A 442-amino-acid polypeptide reads, in one-letter code: tRNA modification GTPase MnmE (442 aa).

(6S)-5-formyl-5,6,7,8-tetrahydrofolate-binding residues include R27, E84, and K124. A TrmE-type G domain is found at 221 to 366; the sequence is GLHVVIVGAP…LLDALQAFAE (146 aa). GTP contacts are provided by residues 231-236, 250-256, and 275-278; these read NAGKSS, SEEAGTT, and DTAG. Mg(2+) is bound by residues S235 and T256. Residue K442 coordinates (6S)-5-formyl-5,6,7,8-tetrahydrofolate.

It belongs to the TRAFAC class TrmE-Era-EngA-EngB-Septin-like GTPase superfamily. TrmE GTPase family. As to quaternary structure, homodimer. Heterotetramer of two MnmE and two MnmG subunits. K(+) is required as a cofactor.

Its subcellular location is the cytoplasm. In terms of biological role, exhibits a very high intrinsic GTPase hydrolysis rate. Involved in the addition of a carboxymethylaminomethyl (cmnm) group at the wobble position (U34) of certain tRNAs, forming tRNA-cmnm(5)s(2)U34. In Brucella melitensis biotype 1 (strain ATCC 23456 / CCUG 17765 / NCTC 10094 / 16M), this protein is tRNA modification GTPase MnmE.